We begin with the raw amino-acid sequence, 132 residues long: Minor structural pilin EpdB (132 aa).

The propeptide occupies 1–4 (MSKG). The short motif at 9–19 (EFIVLFLALLV) is the QXSXEXXXL element.

The N-terminus is probably cleaved by the prepilin peptidase EppA, which recognizes the class III signal sequence.

It is found in the secreted. The protein localises to the cell surface. Its subcellular location is the fimbrium. Minor component of the type IV-like pili. Essential for pili formation. In Methanococcus maripaludis (strain DSM 14266 / JCM 13030 / NBRC 101832 / S2 / LL), this protein is Minor structural pilin EpdB.